A 136-amino-acid polypeptide reads, in one-letter code: Protein NrdI (136 aa).

It belongs to the NrdI family.

Functionally, probably involved in ribonucleotide reductase function. This is Protein NrdI from Escherichia coli O1:K1 / APEC.